The sequence spans 124 residues: Histone H2A (124 aa).

Over residues 1-18 (MSGRGKGGKAKGKSKSRS) the composition is skewed to basic residues. Residues 1–23 (MSGRGKGGKAKGKSKSRSSRAGL) form a disordered region. An N-acetylserine modification is found at serine 2. Serine 2 is subject to Phosphoserine. Glutamine 104 carries the N5-methylglutamine modification.

Belongs to the histone H2A family. The nucleosome is a histone octamer containing two molecules each of H2A, H2B, H3 and H4 assembled in one H3-H4 heterotetramer and two H2A-H2B heterodimers. The octamer wraps approximately 147 bp of DNA. Post-translationally, the N-terminal serine is acetylated. That serine is also phosphorylated in approximately 60% of the molecules isolated from erythrocytes.

It localises to the nucleus. The protein localises to the chromosome. Core component of nucleosome. Nucleosomes wrap and compact DNA into chromatin, limiting DNA accessibility to the cellular machineries which require DNA as a template. Histones thereby play a central role in transcription regulation, DNA repair, DNA replication and chromosomal stability. DNA accessibility is regulated via a complex set of post-translational modifications of histones, also called histone code, and nucleosome remodeling. The polypeptide is Histone H2A (Sipunculus nudus (Sipunculan worm)).